The chain runs to 215 residues: Urease accessory protein UreG (215 aa).

Position 11-18 (11-18) interacts with GTP; the sequence is GPVGAGKS.

This sequence belongs to the SIMIBI class G3E GTPase family. UreG subfamily. As to quaternary structure, homodimer. UreD, UreF and UreG form a complex that acts as a GTP-hydrolysis-dependent molecular chaperone, activating the urease apoprotein by helping to assemble the nickel containing metallocenter of UreC. The UreE protein probably delivers the nickel.

It localises to the cytoplasm. Functionally, facilitates the functional incorporation of the urease nickel metallocenter. This process requires GTP hydrolysis, probably effectuated by UreG. This chain is Urease accessory protein UreG, found in Cenarchaeum symbiosum (strain A).